We begin with the raw amino-acid sequence, 172 residues long: Histone H1-like protein HC2 (172 aa).

Positions 1–77 (MIGAQKKQSG…TVAKKPAVKK (77 aa)) are disordered. Residues 8-77 (QSGKKTASRA…TVAKKPAVKK (70 aa)) are compositionally biased toward basic residues.

It belongs to the histone H1/H5 family. HCT subfamily.

Its function is as follows. Might have a role in establishing the nucleoid structure of elementary bodies. This is Histone H1-like protein HC2 (hctB) from Chlamydia pneumoniae (Chlamydophila pneumoniae).